We begin with the raw amino-acid sequence, 714 residues long: Epithelial splicing regulatory protein 1 (714 aa).

3 RRM domains span residues 225-302 (TVIR…KATG), 326-406 (IIVR…KSTA), and 450-530 (DCVR…ACSA).

Belongs to the ESRP family.

It localises to the nucleus. Its function is as follows. mRNA splicing factor that regulates the formation of epithelial cell-specific isoforms. Specifically regulates the expression of FGFR2-IIIb, an epithelial cell-specific isoform of fgfr2. Acts by directly binding specific sequences in mRNAs. Binds the GU-rich sequence motifs in the ISE/ISS-3, a cis-element regulatory region present in the mRNA of fgfr2. The chain is Epithelial splicing regulatory protein 1 (esrp1) from Danio rerio (Zebrafish).